A 48-amino-acid chain; its full sequence is Cytochrome b559 subunit beta (48 aa).

Residues 23–39 (WLAVHALAIPSVFFLGA) traverse the membrane as a helical segment. H27 contacts heme.

This sequence belongs to the PsbE/PsbF family. In terms of assembly, heterodimer of an alpha subunit and a beta subunit. PSII is composed of 1 copy each of membrane proteins PsbA, PsbB, PsbC, PsbD, PsbE, PsbF, PsbH, PsbI, PsbJ, PsbK, PsbL, PsbM, PsbT, PsbX, PsbY, Psb30/Ycf12, peripheral proteins PsbO, CyanoQ (PsbQ), PsbU, PsbV and a large number of cofactors. It forms dimeric complexes. The cofactor is heme b.

It localises to the cellular thylakoid membrane. Its function is as follows. This b-type cytochrome is tightly associated with the reaction center of photosystem II (PSII). PSII is a light-driven water:plastoquinone oxidoreductase that uses light energy to abstract electrons from H(2)O, generating O(2) and a proton gradient subsequently used for ATP formation. It consists of a core antenna complex that captures photons, and an electron transfer chain that converts photonic excitation into a charge separation. The chain is Cytochrome b559 subunit beta from Prochlorococcus marinus (strain MIT 9515).